The chain runs to 61 residues: Short neurotoxin 1 (61 aa).

Residues 1-16 (LECHNQQSSQPPTTKS) show a composition bias toward polar residues. The disordered stretch occupies residues 1 to 20 (LECHNQQSSQPPTTKSCPGD). Intrachain disulfides connect Cys-3/Cys-23, Cys-17/Cys-40, Cys-42/Cys-53, and Cys-54/Cys-59.

It belongs to the three-finger toxin family. Short-chain subfamily. Type I alpha-neurotoxin sub-subfamily. As to expression, expressed by the venom gland.

The protein localises to the secreted. Functionally, binds to muscle nicotinic acetylcholine receptor (nAChR) and inhibit acetylcholine from binding to the receptor, thereby impairing neuromuscular transmission. This Hemachatus haemachatus (Rinkhals) protein is Short neurotoxin 1.